The primary structure comprises 647 residues: Leishmanolysin-like peptidase (647 aa).

H264 contacts Zn(2+). E265 is a catalytic residue. 2 residues coordinate Zn(2+): H268 and H370.

Belongs to the peptidase M8 family. Requires Zn(2+) as cofactor. Expressed in all cell lines analyzed.

It is found in the cytoplasm. The protein resides in the lipid droplet. Metalloprotease. In Homo sapiens (Human), this protein is Leishmanolysin-like peptidase (LMLN).